The following is a 74-amino-acid chain: uncharacterized protein (74 aa).

This is an uncharacterized protein from Caenorhabditis elegans.